The chain runs to 179 residues: Coiled-coil domain-containing protein 32 (179 aa).

A coiled-coil region spans residues 75 to 98 (EVYLASLEKKLRRIKGLNEEVTSK). The interval 157 to 179 (FLIPPESQAEKPEARDEPAAAEQ) is disordered. A compositionally biased stretch (basic and acidic residues) spans 164-179 (QAEKPEARDEPAAAEQ).

As to quaternary structure, interacts with AP2S1; the interaction is direct and mediates association with adaptor protein complex 2 (AP-2).

It is found in the membrane. The protein resides in the coated pit. Functionally, regulates clathrin-mediated endocytsois of cargos such as transferrin probably through the association and modulation of adaptor protein complex 2 (AP-2). Has a role in ciliogenesis. Required for proper cephalic and left/right axis development. The chain is Coiled-coil domain-containing protein 32 (Ccdc32) from Rattus norvegicus (Rat).